We begin with the raw amino-acid sequence, 172 residues long: Large ribosomal subunit protein uL10 (172 aa).

Belongs to the universal ribosomal protein uL10 family. In terms of assembly, part of the ribosomal stalk of the 50S ribosomal subunit. The N-terminus interacts with L11 and the large rRNA to form the base of the stalk. The C-terminus forms an elongated spine to which L12 dimers bind in a sequential fashion forming a multimeric L10(L12)X complex.

Forms part of the ribosomal stalk, playing a central role in the interaction of the ribosome with GTP-bound translation factors. This is Large ribosomal subunit protein uL10 from Rhodopseudomonas palustris (strain BisB5).